The following is a 132-amino-acid chain: Small ribosomal subunit protein uS9 (132 aa).

The segment at 103 to 132 (NGLLTRDDRTKERKKPGLKRARKAPQYTKR) is disordered. Basic residues predominate over residues 114–132 (ERKKPGLKRARKAPQYTKR).

This sequence belongs to the universal ribosomal protein uS9 family.

The sequence is that of Small ribosomal subunit protein uS9 from Dehalococcoides mccartyi (strain CBDB1).